A 72-amino-acid polypeptide reads, in one-letter code: Large ribosomal subunit protein bL31 (72 aa).

Cys16, Cys18, Cys37, and Cys40 together coordinate Zn(2+).

This sequence belongs to the bacterial ribosomal protein bL31 family. Type A subfamily. Part of the 50S ribosomal subunit. The cofactor is Zn(2+).

Binds the 23S rRNA. This Hahella chejuensis (strain KCTC 2396) protein is Large ribosomal subunit protein bL31.